The sequence spans 539 residues: GMP synthase [glutamine-hydrolyzing] (539 aa).

The region spanning 4-202 is the Glutamine amidotransferase type-1 domain; that stretch reads KILILDFGSQ…VLQIAGAKPD (199 aa). Residue C81 is the Nucleophile of the active site. Catalysis depends on residues H176 and E178. Residues 203 to 395 enclose the GMPS ATP-PPase domain; sequence WIMSNHIEEA…LGLPPEMVYR (193 aa). 230 to 236 contacts ATP; sequence SGGVDSS.

In terms of assembly, homodimer.

The enzyme catalyses XMP + L-glutamine + ATP + H2O = GMP + L-glutamate + AMP + diphosphate + 2 H(+). Its pathway is purine metabolism; GMP biosynthesis; GMP from XMP (L-Gln route): step 1/1. In terms of biological role, catalyzes the synthesis of GMP from XMP. This chain is GMP synthase [glutamine-hydrolyzing], found in Burkholderia ambifaria (strain ATCC BAA-244 / DSM 16087 / CCUG 44356 / LMG 19182 / AMMD) (Burkholderia cepacia (strain AMMD)).